The sequence spans 145 residues: Large ribosomal subunit protein uL13 (145 aa).

Belongs to the universal ribosomal protein uL13 family. As to quaternary structure, part of the 50S ribosomal subunit.

Functionally, this protein is one of the early assembly proteins of the 50S ribosomal subunit, although it is not seen to bind rRNA by itself. It is important during the early stages of 50S assembly. The protein is Large ribosomal subunit protein uL13 of Bacillus velezensis (strain DSM 23117 / BGSC 10A6 / LMG 26770 / FZB42) (Bacillus amyloliquefaciens subsp. plantarum).